We begin with the raw amino-acid sequence, 324 residues long: Concanavalin B (324 aa).

The signal sequence occupies residues 1–25 (MGCERKALILMVVIWIMSFWTLSLA). One can recognise a GH18 domain in the interval 30 to 311 (TEIAVYWGQR…TNIIRYLNAT (282 aa)). Residue Asn309 is glycosylated (N-linked (GlcNAc...) asparagine).

This sequence belongs to the glycosyl hydrolase 18 family.

In terms of biological role, may act as a carbohydrate-binding protein. The sequence is that of Concanavalin B from Canavalia ensiformis (Jack bean).